The primary structure comprises 132 residues: Large ribosomal subunit protein bL21 (132 aa).

A disordered region spans residues 104–132; sequence GKAPSIGPRPPREKKPVVETSAEADDAAA.

Belongs to the bacterial ribosomal protein bL21 family. Part of the 50S ribosomal subunit. Contacts protein L20.

Functionally, this protein binds to 23S rRNA in the presence of protein L20. The polypeptide is Large ribosomal subunit protein bL21 (Rhodopseudomonas palustris (strain BisB18)).